Reading from the N-terminus, the 513-residue chain is Nuclear pore complex protein NUP58 (513 aa).

3 disordered regions span residues 28 to 62, 217 to 239, and 356 to 513; these read QTNS…QPQQ, SVGS…GQQQ, and RETA…TTRR. Over residues 30–50 the composition is skewed to polar residues; that stretch reads NSIFSQSQPQQTNSIFSQSQP. Composition is skewed to low complexity over residues 51 to 62 and 217 to 227; these read QQTNSIFSQPQQ and SVGSQPSQGQG. Residues 356–365 are compositionally biased toward basic and acidic residues; that stretch reads RETAKQEAAA. The segment covering 377 to 386 has biased composition (low complexity); the sequence is STTSTQPSTQ. Positions 393–427 are enriched in polar residues; the sequence is SSATPGGSNPPQTSVPTSNPSSGAGFSFLNTPASG. The segment covering 428–446 has biased composition (low complexity); that stretch reads PSSSLFATPSSTAPTSSLF. 6 consecutive repeat copies span residues 446–447, 458–459, 466–467, 473–474, 486–487, and 497–498. Residues 446–498 form a 6 X 2 AA repeats of F-G region; sequence FGPSPTPTQTPLFGSSPASTFGSTQSLFGQTTPSLTMPSQFGGATPGSGASFG. Residues 452–484 are compositionally biased toward polar residues; it reads PTQTPLFGSSPASTFGSTQSLFGQTTPSLTMPS. The span at 504 to 513 shows a compositional bias: basic residues; that stretch reads SRPKSRTTRR.

The protein belongs to the NUP58 family. As to quaternary structure, part of the nuclear pore complex (NPC). The NPC has an eight-fold symmetrical structure comprising a central transport channel and two rings, the cytoplasmic and nuclear rings, to which eight filaments are attached. The cytoplasmic filaments have loose ends, while the nuclear filaments are joined in a distal ring, forming a nuclear basket. NPCs are highly dynamic in configuration and composition, and can be devided in 3 subcomplexes, the NUP62 subcomplex, the NUP107-160 subcomplex and the NUP93 subcomplex, containing approximately 30 different nucleoporin proteins. Interacts with GAI, NUP62, SKP1A and SKP1B. As to expression, ubiquitous. Higherst expression in cauline leaves, lowest in roots.

The protein localises to the nucleus envelope. It is found in the nucleus. It localises to the nuclear pore complex. In terms of biological role, involved in nucleocytoplasmic trafficking. May have regulatory roles in the gibberellin pathway, in auxin signaling and in light perception. This Arabidopsis thaliana (Mouse-ear cress) protein is Nuclear pore complex protein NUP58.